A 1072-amino-acid polypeptide reads, in one-letter code: Carbamoyl phosphate synthase large chain (1072 aa).

Residues 1–401 are carboxyphosphate synthetic domain; sequence MPKRLDINTI…SLLKAVRSLE (401 aa). ATP is bound by residues Arg-129, Arg-169, Gly-175, Gly-176, Lys-208, Ile-210, Glu-215, Gly-241, Val-242, His-243, Gln-284, and Glu-298. The region spanning 133–327 is the ATP-grasp 1 domain; that stretch reads RTLMQELNEP…IAKLAAKIAV (195 aa). Residues Gln-284, Glu-298, and Asn-300 each coordinate Mg(2+). Residues Gln-284, Glu-298, and Asn-300 each coordinate Mn(2+). Residues 402 to 546 are oligomerization domain; sequence LGIYHLELNH…YSTYGDENES (145 aa). A carbamoyl phosphate synthetic domain region spans residues 547–929; sequence IVTERKSVMV…ALYKGLVAAG (383 aa). The 191-residue stretch at 671-861 folds into the ATP-grasp 2 domain; that stretch reads EAALTELGIP…MANIATKVIL (191 aa). Residues Arg-707, Arg-746, Glu-752, Gly-777, Val-778, His-779, Ser-780, Gln-820, and Glu-832 each coordinate ATP. Mg(2+)-binding residues include Gln-820, Glu-832, and Asn-834. Residues Gln-820, Glu-832, and Asn-834 each contribute to the Mn(2+) site. The MGS-like domain occupies 930-1072; sequence ISIPTHGSVI…PTTRHEVVHA (143 aa). The tract at residues 930–1072 is allosteric domain; it reads ISIPTHGSVI…PTTRHEVVHA (143 aa).

The protein belongs to the CarB family. As to quaternary structure, composed of two chains; the small (or glutamine) chain promotes the hydrolysis of glutamine to ammonia, which is used by the large (or ammonia) chain to synthesize carbamoyl phosphate. Tetramer of heterodimers (alpha,beta)4. Requires Mg(2+) as cofactor. Mn(2+) serves as cofactor.

The catalysed reaction is hydrogencarbonate + L-glutamine + 2 ATP + H2O = carbamoyl phosphate + L-glutamate + 2 ADP + phosphate + 2 H(+). It catalyses the reaction hydrogencarbonate + NH4(+) + 2 ATP = carbamoyl phosphate + 2 ADP + phosphate + 2 H(+). Its pathway is amino-acid biosynthesis; L-arginine biosynthesis; carbamoyl phosphate from bicarbonate: step 1/1. It participates in pyrimidine metabolism; UMP biosynthesis via de novo pathway; (S)-dihydroorotate from bicarbonate: step 1/3. In terms of biological role, large subunit of the glutamine-dependent carbamoyl phosphate synthetase (CPSase). CPSase catalyzes the formation of carbamoyl phosphate from the ammonia moiety of glutamine, carbonate, and phosphate donated by ATP, constituting the first step of 2 biosynthetic pathways, one leading to arginine and/or urea and the other to pyrimidine nucleotides. The large subunit (synthetase) binds the substrates ammonia (free or transferred from glutamine from the small subunit), hydrogencarbonate and ATP and carries out an ATP-coupled ligase reaction, activating hydrogencarbonate by forming carboxy phosphate which reacts with ammonia to form carbamoyl phosphate. This is Carbamoyl phosphate synthase large chain from Bacillus cytotoxicus (strain DSM 22905 / CIP 110041 / 391-98 / NVH 391-98).